The sequence spans 290 residues: 4-hydroxybenzoate octaprenyltransferase (290 aa).

Helical transmembrane passes span 40 to 60 (IAGA…GVVI), 99 to 119 (LALF…LNEL), 120 to 140 (TFWL…TKRF), 142 to 162 (FMPQ…AFAA), 165 to 185 (GEVP…TVAY), 215 to 235 (LMIA…GHRL), 239 to 259 (WPWY…HSLI), and 267 to 287 (SFHA…GLYF).

It belongs to the UbiA prenyltransferase family. It depends on Mg(2+) as a cofactor.

It is found in the cell inner membrane. The enzyme catalyses all-trans-octaprenyl diphosphate + 4-hydroxybenzoate = 4-hydroxy-3-(all-trans-octaprenyl)benzoate + diphosphate. It functions in the pathway cofactor biosynthesis; ubiquinone biosynthesis. Its function is as follows. Catalyzes the prenylation of para-hydroxybenzoate (PHB) with an all-trans polyprenyl group. Mediates the second step in the final reaction sequence of ubiquinone-8 (UQ-8) biosynthesis, which is the condensation of the polyisoprenoid side chain with PHB, generating the first membrane-bound Q intermediate 3-octaprenyl-4-hydroxybenzoate. This is 4-hydroxybenzoate octaprenyltransferase from Alcanivorax borkumensis (strain ATCC 700651 / DSM 11573 / NCIMB 13689 / SK2).